The primary structure comprises 459 residues: tRNA modification GTPase MnmE (459 aa).

3 residues coordinate (6S)-5-formyl-5,6,7,8-tetrahydrofolate: Arg22, Glu85, and Arg124. Positions 221–380 (GLSTVIVGKP…LEIQIRDLFF (160 aa)) constitute a TrmE-type G domain. Residue Asn231 participates in K(+) binding. GTP-binding positions include 231-236 (NVGKSS), 250-256 (TEVAGTT), and 275-278 (DTAG). Mg(2+) is bound at residue Ser235. The K(+) site is built by Thr250, Val252, and Thr255. Thr256 contributes to the Mg(2+) binding site. Residue Lys459 participates in (6S)-5-formyl-5,6,7,8-tetrahydrofolate binding.

This sequence belongs to the TRAFAC class TrmE-Era-EngA-EngB-Septin-like GTPase superfamily. TrmE GTPase family. As to quaternary structure, homodimer. Heterotetramer of two MnmE and two MnmG subunits. K(+) is required as a cofactor.

It is found in the cytoplasm. Exhibits a very high intrinsic GTPase hydrolysis rate. Involved in the addition of a carboxymethylaminomethyl (cmnm) group at the wobble position (U34) of certain tRNAs, forming tRNA-cmnm(5)s(2)U34. The chain is tRNA modification GTPase MnmE from Staphylococcus aureus (strain Mu3 / ATCC 700698).